A 337-amino-acid chain; its full sequence is Glyceraldehyde-3-phosphate dehydrogenase 2 (337 aa).

NADP(+)-binding positions include R11–I12, D35, R80, and T122. Residues S153–T155, T184, R199, T212–G213, and R235 contribute to the D-glyceraldehyde 3-phosphate site. The active-site Nucleophile is C154. Residue N317 coordinates NADP(+).

In terms of assembly, homotetramer.

The protein resides in the cytoplasm. The enzyme catalyses D-glyceraldehyde 3-phosphate + phosphate + NADP(+) = (2R)-3-phospho-glyceroyl phosphate + NADPH + H(+). The catalysed reaction is D-glyceraldehyde 3-phosphate + phosphate + NAD(+) = (2R)-3-phospho-glyceroyl phosphate + NADH + H(+). The protein operates within carbohydrate biosynthesis; Calvin cycle. Functionally, gap2 has a major role in carbon fixation as a component of the Calvin cycle. Catalyzes the oxidative phosphorylation of glyceraldehyde 3-phosphate (G3P) to 1,3-bisphosphoglycerate (BPG) using the cofactor NADP. The first reaction step involves the formation of a hemiacetal intermediate between G3P and a cysteine residue, and this hemiacetal intermediate is then oxidized to a thioester, with concomitant reduction of NADP to NADPH. The reduced NADPH is then exchanged with the second NAD, and the thioester is attacked by a nucleophilic inorganic phosphate to produce BPG. The chain is Glyceraldehyde-3-phosphate dehydrogenase 2 (gap2) from Nostoc sp. (strain PCC 7120 / SAG 25.82 / UTEX 2576).